The primary structure comprises 368 residues: Histidinol-phosphate aminotransferase (368 aa).

K226 is subject to N6-(pyridoxal phosphate)lysine.

The protein belongs to the class-II pyridoxal-phosphate-dependent aminotransferase family. Histidinol-phosphate aminotransferase subfamily. In terms of assembly, homodimer. Pyridoxal 5'-phosphate is required as a cofactor.

It catalyses the reaction L-histidinol phosphate + 2-oxoglutarate = 3-(imidazol-4-yl)-2-oxopropyl phosphate + L-glutamate. It participates in amino-acid biosynthesis; L-histidine biosynthesis; L-histidine from 5-phospho-alpha-D-ribose 1-diphosphate: step 7/9. This is Histidinol-phosphate aminotransferase from Colwellia psychrerythraea (strain 34H / ATCC BAA-681) (Vibrio psychroerythus).